A 360-amino-acid chain; its full sequence is Alanine racemase (360 aa).

K36 functions as the Proton acceptor; specific for D-alanine in the catalytic mechanism. Residue K36 is modified to N6-(pyridoxal phosphate)lysine. Substrate is bound at residue R132. The Proton acceptor; specific for L-alanine role is filled by Y256. M304 contacts substrate.

This sequence belongs to the alanine racemase family. Pyridoxal 5'-phosphate serves as cofactor.

The catalysed reaction is L-alanine = D-alanine. It functions in the pathway amino-acid biosynthesis; D-alanine biosynthesis; D-alanine from L-alanine: step 1/1. Functionally, catalyzes the interconversion of L-alanine and D-alanine. May also act on other amino acids. This Haemophilus influenzae (strain ATCC 51907 / DSM 11121 / KW20 / Rd) protein is Alanine racemase (alr).